The primary structure comprises 188 residues: Crossover junction endodeoxyribonuclease RuvC (188 aa).

Catalysis depends on residues Asp7, Glu68, and Asp141. The Mg(2+) site is built by Asp7, Glu68, and Asp141.

The protein belongs to the RuvC family. As to quaternary structure, homodimer which binds Holliday junction (HJ) DNA. The HJ becomes 2-fold symmetrical on binding to RuvC with unstacked arms; it has a different conformation from HJ DNA in complex with RuvA. In the full resolvosome a probable DNA-RuvA(4)-RuvB(12)-RuvC(2) complex forms which resolves the HJ. Requires Mg(2+) as cofactor.

It localises to the cytoplasm. The catalysed reaction is Endonucleolytic cleavage at a junction such as a reciprocal single-stranded crossover between two homologous DNA duplexes (Holliday junction).. The RuvA-RuvB-RuvC complex processes Holliday junction (HJ) DNA during genetic recombination and DNA repair. Endonuclease that resolves HJ intermediates. Cleaves cruciform DNA by making single-stranded nicks across the HJ at symmetrical positions within the homologous arms, yielding a 5'-phosphate and a 3'-hydroxyl group; requires a central core of homology in the junction. The consensus cleavage sequence is 5'-(A/T)TT(C/G)-3'. Cleavage occurs on the 3'-side of the TT dinucleotide at the point of strand exchange. HJ branch migration catalyzed by RuvA-RuvB allows RuvC to scan DNA until it finds its consensus sequence, where it cleaves and resolves the cruciform DNA. The polypeptide is Crossover junction endodeoxyribonuclease RuvC (Mycobacterium leprae (strain TN)).